A 692-amino-acid polypeptide reads, in one-letter code: Elongation factor G (692 aa).

One can recognise a tr-type G domain in the interval 9–284; the sequence is HKVRNIGIAA…AVVDYLPAPD (276 aa). GTP-binding positions include 18 to 25, 82 to 86, and 136 to 139; these read AHIDAGKT, DTPGH, and NKMD.

This sequence belongs to the TRAFAC class translation factor GTPase superfamily. Classic translation factor GTPase family. EF-G/EF-2 subfamily.

The protein resides in the cytoplasm. Functionally, catalyzes the GTP-dependent ribosomal translocation step during translation elongation. During this step, the ribosome changes from the pre-translocational (PRE) to the post-translocational (POST) state as the newly formed A-site-bound peptidyl-tRNA and P-site-bound deacylated tRNA move to the P and E sites, respectively. Catalyzes the coordinated movement of the two tRNA molecules, the mRNA and conformational changes in the ribosome. This Campylobacter concisus (strain 13826) protein is Elongation factor G.